A 366-amino-acid polypeptide reads, in one-letter code: Peptide chain release factor 1 (366 aa).

The residue at position 230 (Gln230) is an N5-methylglutamine. Composition is skewed to basic and acidic residues over residues 283 to 293 (ARDAQEARDRA) and 315 to 328 (VTDH…KNHP). Positions 283–335 (ARDAQEARDRAAQVGSGERSEKIRTYNYPQNRVTDHRLEGDSKNHPLDSVMAG) are disordered.

It belongs to the prokaryotic/mitochondrial release factor family. In terms of processing, methylated by PrmC. Methylation increases the termination efficiency of RF1.

The protein localises to the cytoplasm. Its function is as follows. Peptide chain release factor 1 directs the termination of translation in response to the peptide chain termination codons UAG and UAA. The sequence is that of Peptide chain release factor 1 from Deinococcus deserti (strain DSM 17065 / CIP 109153 / LMG 22923 / VCD115).